The chain runs to 986 residues: DNA polymerase I (986 aa).

The 5'-3' exonuclease domain maps to 1-303; sequence MFMSAKSPLL…RTFIDKIQAF (303 aa). A 3'-5' exonuclease domain is found at 304–592; the sequence is HRNFSDNQSP…MEDRGIRIDC (289 aa). Residues 308-327 are disordered; sequence SDNQSPVPMGNEADNGEPKK. The polymerase stretch occupies residues 593–986; it reads DYLQTLSQQL…HRGSNWMEAK (394 aa).

The protein belongs to the DNA polymerase type-A family. Single-chain monomer with multiple functions.

It carries out the reaction DNA(n) + a 2'-deoxyribonucleoside 5'-triphosphate = DNA(n+1) + diphosphate. In addition to polymerase activity, this DNA polymerase exhibits 3'-5' and 5'-3' exonuclease activity. The polypeptide is DNA polymerase I (polA) (Synechocystis sp. (strain ATCC 27184 / PCC 6803 / Kazusa)).